Here is a 435-residue protein sequence, read N- to C-terminus: Ras association domain-containing protein 9 (435 aa).

The segment at 1 to 22 is disordered; that stretch reads MAPFGRNLLKTRHKNRSPTKDM. The region spanning 25-119 is the Ras-associating domain; sequence EEKEIVVWVC…MQFVLVKTDA (95 aa). Positions 195–291 form a coiled coil; the sequence is HTIHQQVQRM…KLSAEIEREV (97 aa). The interval 371 to 423 is disordered; that stretch reads SKDGCQGKENRGKEAEASSSNGEIPPLTQRVFNTYTNDTDSDTGISSNHSQDS. The segment covering 375-386 has biased composition (basic and acidic residues); that stretch reads CQGKENRGKEAE. Residues 400–423 are compositionally biased toward polar residues; sequence RVFNTYTNDTDSDTGISSNHSQDS.

In terms of assembly, interacts with PAM. As to expression, testis, kidney, skeletal muscle, liver, lung, brain, heart, pituitary gland, adrenal gland and ovary.

The protein localises to the endosome. Functionally, may play a role in regulating vesicuar trafficking in cells. The chain is Ras association domain-containing protein 9 (Rassf9) from Rattus norvegicus (Rat).